Here is a 122-residue protein sequence, read N- to C-terminus: Large ribosomal subunit protein uL14 (122 aa).

The protein belongs to the universal ribosomal protein uL14 family. As to quaternary structure, part of the 50S ribosomal subunit. Forms a cluster with proteins L3 and L19. In the 70S ribosome, L14 and L19 interact and together make contacts with the 16S rRNA in bridges B5 and B8.

Functionally, binds to 23S rRNA. Forms part of two intersubunit bridges in the 70S ribosome. This Bacillus cytotoxicus (strain DSM 22905 / CIP 110041 / 391-98 / NVH 391-98) protein is Large ribosomal subunit protein uL14.